The following is a 106-amino-acid chain: Glutaredoxin-1 (106 aa).

An N-acetylalanine modification is found at A2. Positions 3 to 106 (QAFVNSKIQP…TRLKQMGALQ (104 aa)) constitute a Glutaredoxin domain. K9 bears the N6-succinyllysine mark. 2 cysteine pairs are disulfide-bonded: C23–C26 and C79–C83.

Belongs to the glutaredoxin family.

It is found in the cytoplasm. Its function is as follows. Has a glutathione-disulfide oxidoreductase activity in the presence of NADPH and glutathione reductase. Reduces low molecular weight disulfides and proteins. This chain is Glutaredoxin-1 (GLRX), found in Bos taurus (Bovine).